Here is a 448-residue protein sequence, read N- to C-terminus: Bud neck protein 5 (448 aa).

3 disordered regions span residues 63–103 (SGND…DPSQ), 171–211 (DDEW…TLGG), and 242–352 (GDNE…SSPI). 2 positions are modified to phosphoserine: Ser-70 and Ser-179. A compositionally biased stretch (acidic residues) spans 171-180 (DDEWEDEKSD). Basic and acidic residues predominate over residues 181–191 (VEEGRVDKGTE). Ser-194 bears the Phosphoserine mark. The segment covering 245 to 262 (EYNHESSRLADQTPHDDN) has biased composition (basic and acidic residues). Phosphothreonine is present on Thr-257. Residues 264-281 (ENCPNRSGGSTPLDSQTK) are compositionally biased toward polar residues. Residues Ser-270 and Ser-273 each carry the phosphoserine modification. Position 274 is a phosphothreonine (Thr-274). Positions 325–343 (SVSSNSNSRNGSRKSSLNK) are enriched in low complexity. Ser-332 and Ser-340 each carry phosphoserine. Tyr-344 bears the Phosphotyrosine mark. Phosphoserine is present on residues Ser-346 and Ser-350.

In terms of assembly, component of the GIN4 complex composed of at least BNI5, CDC3, CDC10, CDC11, CDC12, GIN4, NAP1 and SHS1. Interacts directly with CDC11, CDC12 and SHS1.

Its subcellular location is the cytoplasm. The protein localises to the bud neck. Its function is as follows. Required for normal septin function and cytokinesis. Its recruitment to the bud neck by CDCd11 and SHS1 ensures efficient localization at the bud neck of MYO1, the type II myosin of the actomyosin contractile ring. This chain is Bud neck protein 5, found in Saccharomyces cerevisiae (strain ATCC 204508 / S288c) (Baker's yeast).